Here is a 69-residue protein sequence, read N- to C-terminus: MTRDTPEDVSTAGAKDILDVLNLLKGGEEKISEVELKLDEMEKKMDSLLVQLEDLHRDNNDLAKSSSQK.

Residues 21-64 (LNLLKGGEEKISEVELKLDEMEKKMDSLLVQLEDLHRDNNDLAK) are a coiled coil.

This is an uncharacterized protein from Saccharomyces cerevisiae (strain ATCC 204508 / S288c) (Baker's yeast).